A 331-amino-acid chain; its full sequence is Probable protein phosphatase 2C 72 (331 aa).

A PPM-type phosphatase domain is found at 43–324 (LGSVCSIQGT…DDITVICLFL (282 aa)). Mn(2+) is bound by residues Asp-78, Gly-79, Asp-268, and Asp-315.

This sequence belongs to the PP2C family. It depends on Mg(2+) as a cofactor. The cofactor is Mn(2+).

The catalysed reaction is O-phospho-L-seryl-[protein] + H2O = L-seryl-[protein] + phosphate. It carries out the reaction O-phospho-L-threonyl-[protein] + H2O = L-threonyl-[protein] + phosphate. The chain is Probable protein phosphatase 2C 72 from Arabidopsis thaliana (Mouse-ear cress).